The sequence spans 427 residues: MLDIQQLRSNLDAVAEGLAKRGKPIDFSEFSALEAERKTLQTRTQDLQAQRNSLSKQIGMLKGKGEDASEVMAQVGSIGDELKASEARLAELLTQFNAILAALPNIPDDSVPVGSDETGNVEIKRWGTPRVFDFEVKDHTDVGEALGQLDFGTAAKISGARFSLLKGGLARLHRALAQFMLDTHTAEHGYTELYAPYLVNAASLYGTGQLPKFEEDLFKVLRGDQDPLYLIPTAEVPVTNIVRDEILSAEALPLKFVCHTPCFRSEAGSGGRDVRGMIRQHQFDKVELVQVVHPEKSAEAHEELTRQAEIILEKLELPYRRMALCSGDMGFSAAKTYDLEVWLPAQNTYREISSCSNFGAFQARRMQARFRNDKNKTELCHTLNGSGLAVGRTLVAILENNQNADGSVTIPAVLRPYMGGLEVLSAA.

233–235 (TAE) lines the L-serine pocket. 264-266 (RSE) contributes to the ATP binding site. An L-serine-binding site is contributed by E287. 351–354 (EISS) contacts ATP. S386 lines the L-serine pocket.

It belongs to the class-II aminoacyl-tRNA synthetase family. Type-1 seryl-tRNA synthetase subfamily. As to quaternary structure, homodimer. The tRNA molecule binds across the dimer.

The protein resides in the cytoplasm. The enzyme catalyses tRNA(Ser) + L-serine + ATP = L-seryl-tRNA(Ser) + AMP + diphosphate + H(+). The catalysed reaction is tRNA(Sec) + L-serine + ATP = L-seryl-tRNA(Sec) + AMP + diphosphate + H(+). Its pathway is aminoacyl-tRNA biosynthesis; selenocysteinyl-tRNA(Sec) biosynthesis; L-seryl-tRNA(Sec) from L-serine and tRNA(Sec): step 1/1. Its function is as follows. Catalyzes the attachment of serine to tRNA(Ser). Is also able to aminoacylate tRNA(Sec) with serine, to form the misacylated tRNA L-seryl-tRNA(Sec), which will be further converted into selenocysteinyl-tRNA(Sec). This is Serine--tRNA ligase from Dechloromonas aromatica (strain RCB).